Consider the following 199-residue polypeptide: Molybdenum cofactor guanylyltransferase (199 aa).

Residues 12–14 (LAG), Lys-25, Asn-53, Asp-71, and Asp-101 each bind GTP. Asp-101 contributes to the Mg(2+) binding site.

The protein belongs to the MobA family. In terms of assembly, monomer. The cofactor is Mg(2+).

The protein localises to the cytoplasm. The enzyme catalyses Mo-molybdopterin + GTP + H(+) = Mo-molybdopterin guanine dinucleotide + diphosphate. Transfers a GMP moiety from GTP to Mo-molybdopterin (Mo-MPT) cofactor (Moco or molybdenum cofactor) to form Mo-molybdopterin guanine dinucleotide (Mo-MGD) cofactor. In Cupriavidus taiwanensis (strain DSM 17343 / BCRC 17206 / CCUG 44338 / CIP 107171 / LMG 19424 / R1) (Ralstonia taiwanensis (strain LMG 19424)), this protein is Molybdenum cofactor guanylyltransferase.